A 108-amino-acid chain; its full sequence is uncharacterized protein (108 aa).

A signal peptide spans 1–22 (MMIKQCVICLSLLVFGTTAAHA).

This is an uncharacterized protein from Bacillus subtilis (strain 168).